We begin with the raw amino-acid sequence, 496 residues long: UDP-N-acetylmuramoyl-L-alanyl-D-glutamate--2,6-diaminopimelate ligase (496 aa).

S32 contributes to the UDP-N-acetyl-alpha-D-muramoyl-L-alanyl-D-glutamate binding site. Residue 116-122 coordinates ATP; that stretch reads GTNGKTT. Residues 158-159, S185, Q191, and R193 each bind UDP-N-acetyl-alpha-D-muramoyl-L-alanyl-D-glutamate; that span reads TT. The residue at position 225 (K225) is an N6-carboxylysine. Residues R389, 413–416, G464, and E468 contribute to the meso-2,6-diaminopimelate site; that span reads DNPR. The short motif at 413–416 is the Meso-diaminopimelate recognition motif element; the sequence is DNPR.

Belongs to the MurCDEF family. MurE subfamily. Requires Mg(2+) as cofactor. Post-translationally, carboxylation is probably crucial for Mg(2+) binding and, consequently, for the gamma-phosphate positioning of ATP.

It is found in the cytoplasm. The catalysed reaction is UDP-N-acetyl-alpha-D-muramoyl-L-alanyl-D-glutamate + meso-2,6-diaminopimelate + ATP = UDP-N-acetyl-alpha-D-muramoyl-L-alanyl-gamma-D-glutamyl-meso-2,6-diaminopimelate + ADP + phosphate + H(+). It participates in cell wall biogenesis; peptidoglycan biosynthesis. Catalyzes the addition of meso-diaminopimelic acid to the nucleotide precursor UDP-N-acetylmuramoyl-L-alanyl-D-glutamate (UMAG) in the biosynthesis of bacterial cell-wall peptidoglycan. The polypeptide is UDP-N-acetylmuramoyl-L-alanyl-D-glutamate--2,6-diaminopimelate ligase (Nostoc sp. (strain PCC 7120 / SAG 25.82 / UTEX 2576)).